Reading from the N-terminus, the 246-residue chain is Exosome complex component Rrp41 (246 aa).

The protein belongs to the RNase PH family. Rrp41 subfamily. In terms of assembly, component of the archaeal exosome complex. Forms a hexameric ring-like arrangement composed of 3 Rrp41-Rrp42 heterodimers. The hexameric ring associates with a trimer of Rrp4 and/or Csl4 subunits.

The protein localises to the cytoplasm. Catalytic component of the exosome, which is a complex involved in RNA degradation. Has 3'-&gt;5' exoribonuclease activity. Can also synthesize heteromeric RNA-tails. The polypeptide is Exosome complex component Rrp41 (Pyrobaculum neutrophilum (strain DSM 2338 / JCM 9278 / NBRC 100436 / V24Sta) (Thermoproteus neutrophilus)).